Reading from the N-terminus, the 67-residue chain is Large ribosomal subunit protein uL29 (67 aa).

The protein belongs to the universal ribosomal protein uL29 family.

The sequence is that of Large ribosomal subunit protein uL29 from Alkaliphilus oremlandii (strain OhILAs) (Clostridium oremlandii (strain OhILAs)).